The chain runs to 894 residues: Glutamate receptor 3 (894 aa).

A signal peptide spans 1-28 (MARQKKMGQNVLRAVFFLVLGLLGHSHG). The Extracellular portion of the chain corresponds to 29–552 (GFPNTISIGG…GVFSFLDPLA (524 aa)). N-linked (GlcNAc...) asparagine glycosylation is found at Asn-63, Asn-266, Asn-380, Asn-415, and Asn-422. Cys-91 and Cys-340 form a disulfide bridge. L-glutamate contacts are provided by Pro-508, Thr-510, and Arg-515. The chain crosses the membrane as a helical span at residues 553 to 573 (YEIWMCIVFASIGVSVVLFLV). The Cytoplasmic portion of the chain corresponds to 574–602 (SRFSPYEWHLEDNNEEPRDPQSPPDPPNE). Residues 603-618 (FGIFNSLWFSLGAFMQ) constitute an intramembrane region (helical; Pore-forming). An intramembrane segment occupies 619–621 (QGC). Residue Cys-621 is the site of S-palmitoyl cysteine attachment. Residues 622–627 (DISPRS) are Cytoplasmic-facing. The helical transmembrane segment at 628–648 (LSGRIVGGVWWFFTLIIISSY) threads the bilayer. Residues 649-823 (TANLAAFLTV…DKTSALSLSN (175 aa)) are Extracellular-facing. L-glutamate is bound by residues Ser-686, Thr-687, and Glu-737. A disulfide bond links Cys-750 and Cys-805. The chain crosses the membrane as a helical span at residues 824-844 (VAGVFYILVGGLGLAMMVALI). Topologically, residues 845 to 894 (EFCYKSRAESKRMKLTKNTQNFKPAPATNTQNYATYREGYNVYGTESVKI) are cytoplasmic. Cys-847 carries the S-palmitoyl cysteine lipid modification. Phosphotyrosine occurs at positions 877 and 887.

The protein belongs to the glutamate-gated ion channel (TC 1.A.10.1) family. GRIA3 subfamily. As to quaternary structure, homotetramer or heterotetramer of pore-forming glutamate receptor subunits. Tetramers may be formed by the dimerization of dimers. Interacts with PICK1, GRIP1 and GRIP2. Found in a complex with GRIA1, GRIA2, GRIA4, CNIH2, CNIH3, CACNG2, CACNG3, CACNG4, CACNG5, CACNG7 and CACNG8. Interacts with CACNG5. Found in a complex with GRIA1, GRIA2, GRIA4, DLG4, CACNG8 and CNIH2.

It localises to the cell membrane. It is found in the postsynaptic cell membrane. Its subcellular location is the postsynaptic density membrane. The catalysed reaction is Ca(2+)(in) = Ca(2+)(out). Ionotropic glutamate receptor that functions as a ligand-gated cation channel, gated by L-glutamate and glutamatergic agonists such as alpha-amino-3-hydroxy-5-methyl-4-isoxazolepropionic acid (AMPA), quisqualic acid, and kainic acid. L-glutamate acts as an excitatory neurotransmitter at many synapses in the central nervous system and plays an important role in fast excitatory synaptic transmission by inducing long-term potentiation. Binding of the excitatory neurotransmitter L-glutamate induces a conformation change, leading to the opening of the cation channel, and thereby converts the chemical signal to an electrical impulse upon entry of calcium. The receptor then desensitizes rapidly and enters a transient inactive state, characterized by the presence of bound agonist. In the presence of CACNG8, shows resensitization which is characterized by a delayed accumulation of current flux upon continued application of glutamate. In Macaca fascicularis (Crab-eating macaque), this protein is Glutamate receptor 3.